A 373-amino-acid chain; its full sequence is NAD-dependent protein deacetylase SIR2rp1 (373 aa).

In terms of domain architecture, Deacetylase sirtuin-type spans 12–349; sequence HALGEPTVEG…LKLAECLGLR (338 aa). NAD(+) is bound by residues 39–59 and 124–127; these read GAGASVAAGIPDFRSSDTGIY and QNID. The Proton acceptor role is filled by His-144. The Zn(2+) site is built by Cys-152, Cys-155, Cys-176, and Cys-179. NAD(+) is bound by residues 216 to 218 and 241 to 243; these read GTS and NRE. A disordered region spans residues 263–313; that stretch reads DAVAKEGRSSSSQSRSPSASARREEGGTEDGSSSPNEEVEDASTSSSSDGY. Positions 271–282 are enriched in low complexity; it reads SSSSQSRSPSAS. Cys-335 contributes to the NAD(+) binding site.

It belongs to the sirtuin family. Class I subfamily. Zn(2+) serves as cofactor.

The protein resides in the nucleus. The catalysed reaction is N(6)-acetyl-L-lysyl-[protein] + NAD(+) + H2O = 2''-O-acetyl-ADP-D-ribose + nicotinamide + L-lysyl-[protein]. In terms of biological role, NAD-dependent deacetylase, which probably acts as a regulator of gene expression believed to help form modified chromatin structures on the genes it regulates. The protein is NAD-dependent protein deacetylase SIR2rp1 (SIR2rp1) of Leishmania major.